The chain runs to 210 residues: Orotate phosphoribosyltransferase (210 aa).

5-phospho-alpha-D-ribose 1-diphosphate contacts are provided by residues R94, K98, H100, and 120-128 (EDLISTGGS). S124 is a binding site for orotate.

This sequence belongs to the purine/pyrimidine phosphoribosyltransferase family. PyrE subfamily. Homodimer. The cofactor is Mg(2+).

It catalyses the reaction orotidine 5'-phosphate + diphosphate = orotate + 5-phospho-alpha-D-ribose 1-diphosphate. Its pathway is pyrimidine metabolism; UMP biosynthesis via de novo pathway; UMP from orotate: step 1/2. Its function is as follows. Catalyzes the transfer of a ribosyl phosphate group from 5-phosphoribose 1-diphosphate to orotate, leading to the formation of orotidine monophosphate (OMP). This chain is Orotate phosphoribosyltransferase, found in Bacillus cytotoxicus (strain DSM 22905 / CIP 110041 / 391-98 / NVH 391-98).